The chain runs to 245 residues: 5-oxoprolinase subunit A (245 aa).

The protein belongs to the LamB/PxpA family. In terms of assembly, forms a complex composed of PxpA, PxpB and PxpC.

It catalyses the reaction 5-oxo-L-proline + ATP + 2 H2O = L-glutamate + ADP + phosphate + H(+). Catalyzes the cleavage of 5-oxoproline to form L-glutamate coupled to the hydrolysis of ATP to ADP and inorganic phosphate. The chain is 5-oxoprolinase subunit A from Haemophilus influenzae (strain 86-028NP).